The primary structure comprises 255 residues: 5'-nucleotidase SurE (255 aa).

A divalent metal cation contacts are provided by D11, D12, S43, and N99.

The protein belongs to the SurE nucleotidase family. Requires a divalent metal cation as cofactor.

It localises to the cytoplasm. It catalyses the reaction a ribonucleoside 5'-phosphate + H2O = a ribonucleoside + phosphate. Functionally, nucleotidase that shows phosphatase activity on nucleoside 5'-monophosphates. This chain is 5'-nucleotidase SurE, found in Caldanaerobacter subterraneus subsp. tengcongensis (strain DSM 15242 / JCM 11007 / NBRC 100824 / MB4) (Thermoanaerobacter tengcongensis).